The following is a 62-amino-acid chain: Ranacyclin-T (62 aa).

An N-terminal signal peptide occupies residues 1 to 22 (MFTMKKTLLVLFFLGVVSLSLC). Residues 23-43 (VEERDADEEDGGEVMEEEVKR) constitute a propeptide that is removed on maturation. A disulfide bridge connects residues Cys49 and Cys59. Lysine amide is present on Lys60.

This sequence belongs to the frog skin active peptide (FSAP) family. Brevinin subfamily. Expressed by the skin granular glands.

It localises to the secreted. Functionally, has antibacterial activity against Gram-positive bacteria B.megaterium Bm11, S.lentus and M.luteus, and Gram-negative bacteria E.coli D22, Y.pseudotuberculosis YP III and P.syringae pv tabaci, and antifungal activity against C.albicans ATCC 10231, C.tropicalis, C.guiller-mondii and P.nicotianae spores. Has weak hemolytic activity. The mature peptide inserts into the hydrophobic core of the bacterial cell membrane and increases permeability without disrupting membrane integrity. Probably binds to the outer membrane surface before aggregating to form transmembrane pores. In Rana temporaria (European common frog), this protein is Ranacyclin-T (RNCT).